Here is a 507-residue protein sequence, read N- to C-terminus: uncharacterized protein (507 aa).

The next 12 helical transmembrane spans lie at 46-66 (WIVLLAVALLNNTNTMSWIGY), 83-103 (AWLSMVYMMCTIPVGMFAMWA), 112-132 (AVLIAGWANGIGAVIRVISSL), 141-161 (FPICMTGQGIAAIAYPFIMFL), 181-201 (IGVMSNPLGVLMANLISPAIV), 207-227 (VIWLNIFTCVPSLIAMLIATF), 263-283 (IILLIVMGGGIGMFNCLYTVM), 299-319 (VCAALMIVGGVFGAAASSIFV), 328-348 (TLKIALGAAVIFGLIFLQLTL), 354-374 (VILGVTCLLFGVLGLATYPIG), 389-409 (TSTGLIVLSGQIQSVIYVFIM), and 442-462 (MSIMIFSLLATLLVLTLVVLF). Positions 477–493 (ATADKAKELSNQNKDRI) are enriched in basic and acidic residues. A disordered region spans residues 477-507 (ATADKAKELSNQNKDRITLQAESAVEPLQKK).

It is found in the membrane. This is an uncharacterized protein from Caenorhabditis elegans.